Here is a 146-residue protein sequence, read N- to C-terminus: Transcriptional repressor NrdR (146 aa).

A zinc finger spans residues 3 to 34; that stretch reads CPFCQNPDTKVIDTRISDDGHSIRRRRVCPKC. Residues 46–136 enclose the ATP-cone domain; the sequence is LLVTKRSGGV…VYQNFAGLED (91 aa).

It belongs to the NrdR family. It depends on Zn(2+) as a cofactor.

Functionally, negatively regulates transcription of bacterial ribonucleotide reductase nrd genes and operons by binding to NrdR-boxes. The chain is Transcriptional repressor NrdR from Bifidobacterium longum (strain NCC 2705).